A 620-amino-acid chain; its full sequence is Probable potassium transport system protein Kup (620 aa).

Helical transmembrane passes span 7 to 27, 44 to 64, 98 to 118, 135 to 155, 166 to 186, 201 to 221, 245 to 265, 278 to 298, 335 to 355, 361 to 381, 394 to 414, and 417 to 437; these read LALA…LYAI, VFGV…LKYL, FFLI…GMIT, PAFH…LFLF, LFGP…LVEI, GIMF…AVFL, WAFL…ALLL, LVPS…TIIA, IYVP…VIGF, LAAA…ILFY, VLNV…GASA, and LFHG…VMMT.

The protein belongs to the HAK/KUP transporter (TC 2.A.72) family.

The protein resides in the cell inner membrane. The catalysed reaction is K(+)(in) + H(+)(in) = K(+)(out) + H(+)(out). Its function is as follows. Transport of potassium into the cell. Likely operates as a K(+):H(+) symporter. The polypeptide is Probable potassium transport system protein Kup (Chlorobium chlorochromatii (strain CaD3)).